A 441-amino-acid chain; its full sequence is Ribosomal protein uS12 methylthiotransferase RimO (441 aa).

Residues 8–118 (PKIGFVSLGC…VLQHVHHYVP (111 aa)) form the MTTase N-terminal domain. [4Fe-4S] cluster contacts are provided by cysteine 17, cysteine 53, cysteine 82, cysteine 150, cysteine 154, and cysteine 157. A Radical SAM core domain is found at 136–373 (LTPRHYAYLK…MQLQQQISAE (238 aa)). The TRAM domain occupies 376 to 441 (QEKVGREILV…DEYDLWGSRV (66 aa)).

It belongs to the methylthiotransferase family. RimO subfamily. It depends on [4Fe-4S] cluster as a cofactor.

The protein resides in the cytoplasm. It carries out the reaction L-aspartate(89)-[ribosomal protein uS12]-hydrogen + (sulfur carrier)-SH + AH2 + 2 S-adenosyl-L-methionine = 3-methylsulfanyl-L-aspartate(89)-[ribosomal protein uS12]-hydrogen + (sulfur carrier)-H + 5'-deoxyadenosine + L-methionine + A + S-adenosyl-L-homocysteine + 2 H(+). Catalyzes the methylthiolation of an aspartic acid residue of ribosomal protein uS12. The protein is Ribosomal protein uS12 methylthiotransferase RimO of Salmonella typhi.